Here is a 480-residue protein sequence, read N- to C-terminus: UDP-N-acetylmuramate--L-alanine ligase (480 aa).

129–135 (GTHGKTT) is an ATP binding site.

This sequence belongs to the MurCDEF family.

It localises to the cytoplasm. The catalysed reaction is UDP-N-acetyl-alpha-D-muramate + L-alanine + ATP = UDP-N-acetyl-alpha-D-muramoyl-L-alanine + ADP + phosphate + H(+). Its pathway is cell wall biogenesis; peptidoglycan biosynthesis. Cell wall formation. The protein is UDP-N-acetylmuramate--L-alanine ligase of Mannheimia succiniciproducens (strain KCTC 0769BP / MBEL55E).